A 902-amino-acid chain; its full sequence is DNA mismatch repair protein MutS (902 aa).

An ATP-binding site is contributed by 647 to 654 (GPNMGGKS).

Belongs to the DNA mismatch repair MutS family.

Its function is as follows. This protein is involved in the repair of mismatches in DNA. It is possible that it carries out the mismatch recognition step. This protein has a weak ATPase activity. The chain is DNA mismatch repair protein MutS from Nitrosospira multiformis (strain ATCC 25196 / NCIMB 11849 / C 71).